Consider the following 773-residue polypeptide: Jhy protein homolog (773 aa).

Disordered regions lie at residues 1–247, 325–373, 496–526, 596–615, and 713–743; these read MSHS…SKQY, WSQY…KSLV, KKHP…QPKL, ESES…KISR, and AKTI…KEDT. Polar residues predominate over residues 10–28; it reads VSIQSPVHHTNIKVQSTEP. Over residues 29-43 the composition is skewed to basic and acidic residues; sequence SFKKEDLHLISKDSL. Over residues 48 to 57 the composition is skewed to polar residues; sequence ESPTQKIKSQ. A compositionally biased stretch (acidic residues) spans 59 to 84; sequence DLEDQIQDNDMEPDSLEEENLSETEE. The span at 112-134 shows a compositional bias: basic and acidic residues; that stretch reads PTEDKYSHIRYDPNWKSKKEEGK. The span at 145–154 shows a compositional bias: polar residues; the sequence is VDSSTENLTL. A compositionally biased stretch (low complexity) spans 216–229; that stretch reads SNLSRYLKSSSSRS. The span at 334-351 shows a compositional bias: polar residues; the sequence is SSGPRGQSSETTNGQQPS. The span at 353 to 369 shows a compositional bias: basic residues; it reads KPAKHKIRKQRRHRHGP. Polar residues predominate over residues 500 to 516; the sequence is SGSQKGSQSVSNINRQA. Low complexity predominate over residues 598–610; that stretch reads ESQLSSERSQRNQ. The segment covering 728-743 has biased composition (basic and acidic residues); that stretch reads ASKEKKTPTHAGKEDT.

Required for the normal development of cilia in brain ependymal cells lining the ventricular surfaces. In Bos taurus (Bovine), this protein is Jhy protein homolog (JHY).